The chain runs to 472 residues: Glutamate--tRNA ligase 1 (472 aa).

Residues 13–23 (PSPTGYLHIGG) carry the 'HIGH' region motif. Residues C102, C104, C129, and E131 each coordinate Zn(2+). Residues 239–243 (RLSKR) carry the 'KMSKS' region motif. K242 lines the ATP pocket.

It belongs to the class-I aminoacyl-tRNA synthetase family. Glutamate--tRNA ligase type 1 subfamily. In terms of assembly, monomer. Requires Zn(2+) as cofactor.

The protein localises to the cytoplasm. It carries out the reaction tRNA(Glu) + L-glutamate + ATP = L-glutamyl-tRNA(Glu) + AMP + diphosphate. Functionally, catalyzes the attachment of glutamate to tRNA(Glu) in a two-step reaction: glutamate is first activated by ATP to form Glu-AMP and then transferred to the acceptor end of tRNA(Glu). This chain is Glutamate--tRNA ligase 1, found in Syntrophus aciditrophicus (strain SB).